A 467-amino-acid chain; its full sequence is Gamma-aminobutyric acid receptor subunit gamma-3 (467 aa).

The N-terminal stretch at 1-17 (MAAKLLLLLCLFSGLHA) is a signal peptide. Residues 18 to 256 (RSRRVEEDEN…FELSRRMGYF (239 aa)) lie on the Extracellular side of the membrane. N110 is a glycosylation site (N-linked (GlcNAc...) asparagine). The cysteines at positions 171 and 185 are disulfide-linked. Residue N228 is glycosylated (N-linked (GlcNAc...) asparagine). The chain crosses the membrane as a helical span at residues 257–277 (TIQTYIPCILTVVLSWVSFWI). Over 278 to 283 (KKDATP) the chain is Cytoplasmic. A helical transmembrane segment spans residues 284 to 303 (ARTTLGITTVLTMTTLSTIA). Over 304 to 311 (RKSLPRVS) the chain is Extracellular. A helical transmembrane segment spans residues 312-332 (YVTAMDLFVTVCFLFVFAALM). Topologically, residues 333–446 (EYATLNYYSS…DVSELDSYSR (114 aa)) are cytoplasmic. Residues 447 to 467 (VFFPTSFLLFNLVYWVGYLYL) form a helical membrane-spanning segment.

It belongs to the ligand-gated ion channel (TC 1.A.9) family. Gamma-aminobutyric acid receptor (TC 1.A.9.5) subfamily. GABRG3 sub-subfamily. Heteropentamer, formed by a combination of alpha (GABRA1-6), beta (GABRB1-3), gamma (GABRG1-3), delta (GABRD), epsilon (GABRE), rho (GABRR1-3), pi (GABRP) and theta (GABRQ) chains, each subunit exhibiting distinct physiological and pharmacological properties. In terms of processing, may be palmitoylated. In terms of tissue distribution, expressed in brain.

The protein localises to the postsynaptic cell membrane. It is found in the cell membrane. It catalyses the reaction chloride(in) = chloride(out). Gamma subunit of the heteropentameric ligand-gated chloride channel gated by gamma-aminobutyric acid (GABA), a major inhibitory neurotransmitter in the brain. GABA-gated chloride channels, also named GABA(A) receptors (GABAAR), consist of five subunits arranged around a central pore and contain GABA active binding site(s) located at the alpha and beta subunit interface(s). When activated by GABA, GABAARs selectively allow the flow of chloride across the cell membrane down their electrochemical gradient. This is Gamma-aminobutyric acid receptor subunit gamma-3 from Mus musculus (Mouse).